A 409-amino-acid chain; its full sequence is DEP domain-containing mTOR-interacting protein (409 aa).

Residue Met-1 is modified to N-acetylmethionine. The disordered stretch occupies residues 1-25 (MEEGGSTGSAGSDSSTSGSGGAQQR). 2 DEP domains span residues 36–119 (TGEQ…RFRK) and 145–219 (SPEN…QFRM). A DDEX motif motif is present at residues 217 to 235 (FRMNFRRRRRLMELLNEKS). Position 235 is a phosphoserine; by MAPK3 (Ser-235). A Phosphothreonine modification is found at Thr-241. Residues Ser-244 and Ser-258 each carry the phosphoserine modification. Phosphothreonine is present on Thr-259. Ser-263, Ser-265, Ser-280, Ser-282, and Ser-283 each carry phosphoserine. Residues Ser-286 and Ser-287 each carry the phosphoserine; by CK1 modification. A BetaTrCP degron motif motif is present at residues 286–291 (SSGYFS). A Phosphotyrosine; by SYK modification is found at Tyr-289. The residue at position 291 (Ser-291) is a Phosphoserine; by CK1. Ser-293 carries the phosphoserine; by MTOR modification. Phosphothreonine; by MTOR is present on Thr-295. Phosphoserine is present on residues Ser-297 and Ser-298. Ser-299 bears the Phosphoserine; by MTOR mark. One can recognise a PDZ domain in the interval 330 to 407 (TFTIVGDAVG…TIVMEVMEEL (78 aa)).

In terms of assembly, associated component of the mechanistic target of rapamycin complex 1 (mTORC1) which contains MTOR, MLST8 and RPTOR. Associated component of the mechanistic target of rapamycin complex 2 (mTORC2) which contains MTOR, MLST8, PROTOR1, RICTOR, MAPKAP1 and DEPTOR. Interacts (via PDZ domain) with MTOR; interacts with MTOR within both mTORC1 and mTORC2. Interacts (via PDZ domain) with MINAR1 (via N-terminus). Interacts with SIK3. Phosphorylation weakens interaction with MTOR within mTORC1 and mTORC2. Phosphorylated at Ser-286, Ser-287 and Ser-291 in response to mitogenic stimulation by MTOR: DEPTOR is either directly phosphorylated by MTOR or indirectly via proteins kinases that are activated by MTOR, such as CK1/CSNK1A1. Phosphorylation at Ser-286, Ser-287 and Ser-291 promotes ubiquitination by the SCF(BTRC) complex, followed by degradation. Phosphorylation at Ser-235 by MAPK3/ERK1 promotes deubiquitination by USP7, enhancing its stability. Phosphorylation at Tyr-289 by SYK impairs its interaction with MTOR, promoting mTORC1 and mTORC2 signaling. Post-translationally, ubiquitinated; leading to proteasomal degradation. Ubiquitination by the SCF(BTRC) and SCF(FBXW11) complexes following phosphorylation at Ser-286, Ser-287 and Ser-291 by MTOR, leads to its degradation by the proteasome. Deubiquitinated by OTUB1 in response to amino acid via a non-canonical mechanism, leading to DEPTOR stability. Deubiquitinated by USP7 following phosphorylation at Ser-235, promoting its stability.

The protein localises to the lysosome membrane. With respect to regulation, inhibited upon phosphatidic acid-binding: phosphatidic acid produced upon mitogenic stimulation promotes DEPTOR dissociatiom from the mTORC1 and mTORC2 complexes, leading to their activation. Specifically binds unsaturated phosphatidic acid, such as 16:0-18:1, 18:0-18:1 and di-18:1. Inhibited when nutrients are present via a feedback loop: phosphorylation by MTOR promotes DEPTOR ubiquitination and degradation. Its function is as follows. Negative regulator of the mTORC1 and mTORC2 complexes: inhibits the protein kinase activity of MTOR, thereby inactivating both complexes. DEPTOR inhibits mTORC1 and mTORC2 to induce autophagy. In contrast to AKT1S1/PRAS40, only partially inhibits mTORC1 activity. The protein is DEP domain-containing mTOR-interacting protein of Homo sapiens (Human).